Consider the following 545-residue polypeptide: CTP synthase (545 aa).

Positions 1-266 (MTTNYIFVTG…DDLVCARFGI (266 aa)) are amidoligase domain. Position 14 (S14) interacts with CTP. A UTP-binding site is contributed by S14. ATP is bound by residues 15–20 (SLGKGI) and D72. Mg(2+) contacts are provided by D72 and E140. Residues 147 to 149 (DIE), 187 to 192 (KTKPTQ), and K223 contribute to the CTP site. UTP contacts are provided by residues 187–192 (KTKPTQ) and K223. ATP is bound at residue 239 to 241 (KDV). A Glutamine amidotransferase type-1 domain is found at 291–542 (TIGMVGKYTE…VKAAGQFQRG (252 aa)). Residue G352 coordinates L-glutamine. The Nucleophile; for glutamine hydrolysis role is filled by C379. L-glutamine contacts are provided by residues 380-383 (LGMQ), E403, and R470. Active-site residues include H515 and E517.

It belongs to the CTP synthase family. In terms of assembly, homotetramer.

It catalyses the reaction UTP + L-glutamine + ATP + H2O = CTP + L-glutamate + ADP + phosphate + 2 H(+). The catalysed reaction is L-glutamine + H2O = L-glutamate + NH4(+). The enzyme catalyses UTP + NH4(+) + ATP = CTP + ADP + phosphate + 2 H(+). Its pathway is pyrimidine metabolism; CTP biosynthesis via de novo pathway; CTP from UDP: step 2/2. With respect to regulation, allosterically activated by GTP, when glutamine is the substrate; GTP has no effect on the reaction when ammonia is the substrate. The allosteric effector GTP functions by stabilizing the protein conformation that binds the tetrahedral intermediate(s) formed during glutamine hydrolysis. Inhibited by the product CTP, via allosteric rather than competitive inhibition. Functionally, catalyzes the ATP-dependent amination of UTP to CTP with either L-glutamine or ammonia as the source of nitrogen. Regulates intracellular CTP levels through interactions with the four ribonucleotide triphosphates. This chain is CTP synthase, found in Vibrio cholerae serotype O1 (strain ATCC 39541 / Classical Ogawa 395 / O395).